Reading from the N-terminus, the 160-residue chain is Serine-protein kinase RsbW (160 aa).

It belongs to the anti-sigma-factor family.

The enzyme catalyses L-seryl-[protein] + ATP = O-phospho-L-seryl-[protein] + ADP + H(+). It catalyses the reaction L-threonyl-[protein] + ATP = O-phospho-L-threonyl-[protein] + ADP + H(+). Functionally, negative regulator of sigma-B activity. Phosphorylates and inactivates its specific antagonist protein, RsbV. Upon phosphorylation of RsbV, RsbW is released and binds to sigma-B, thereby blocking its ability to form an RNA polymerase holoenzyme (E-sigma-B). The polypeptide is Serine-protein kinase RsbW (Bacillus anthracis (strain A0248)).